We begin with the raw amino-acid sequence, 516 residues long: L-amino-acid oxidase (516 aa).

The N-terminal stretch at 1–18 (MNVFFMFSLLFLAALGSC) is a signal peptide. A disulfide bridge links Cys-28 with Cys-191. FAD contacts are provided by residues 61-62 (MA), 81-82 (EA), Arg-89, and 105-108 (GPMR). Arg-108 lines the substrate pocket. A glycan (N-linked (GlcNAc...) (complex) asparagine) is linked at Asn-190. Residue His-241 coordinates substrate. Val-279 contributes to the FAD binding site. Cysteines 349 and 430 form a disulfide. Asn-379 carries N-linked (GlcNAc...) (complex) asparagine glycosylation. Tyr-390 provides a ligand contact to substrate. FAD contacts are provided by residues Glu-475 and 482–487 (GWIDST). Residue 482–483 (GW) coordinates substrate.

In terms of assembly, homodimer; non-covalently linked. FAD is required as a cofactor. In terms of processing, N-glycosylated at Asn-190 and Asn-379 with bis-sialylated, biantennary, core-fucosylated dodecasaccharide (composed of N-acetylglucosamine, fucose, mannose, galactose, and sialic acid residues). As to expression, expressed by the venom gland.

Its subcellular location is the secreted. It carries out the reaction an L-alpha-amino acid + O2 + H2O = a 2-oxocarboxylate + H2O2 + NH4(+). The catalysed reaction is L-leucine + O2 + H2O = 4-methyl-2-oxopentanoate + H2O2 + NH4(+). The enzyme catalyses L-phenylalanine + O2 + H2O = 3-phenylpyruvate + H2O2 + NH4(+). It catalyses the reaction L-tryptophan + O2 + H2O = indole-3-pyruvate + H2O2 + NH4(+). It carries out the reaction L-methionine + O2 + H2O = 4-methylsulfanyl-2-oxobutanoate + H2O2 + NH4(+). The catalysed reaction is L-isoleucine + O2 + H2O = (S)-3-methyl-2-oxopentanoate + H2O2 + NH4(+). The enzyme catalyses L-arginine + O2 + H2O = 5-guanidino-2-oxopentanoate + H2O2 + NH4(+). It catalyses the reaction L-aspartate + O2 + H2O = oxaloacetate + H2O2 + NH4(+). It carries out the reaction L-histidine + O2 + H2O = 3-(imidazol-5-yl)pyruvate + H2O2 + NH4(+). The catalysed reaction is L-2-aminohexanoate + O2 + H2O = 2-oxohexanoate + H2O2 + NH4(+). The enzyme catalyses L-2-aminopentanoate + O2 + H2O = 2-oxopentanoate + H2O2 + NH4(+). Catalyzes an oxidative deamination of predominantly hydrophobic and aromatic L-amino acids, thus producing hydrogen peroxide that may contribute to the diverse toxic effects of this enzyme. Shows high affinity for L-Phe, L-Trp, L-Met, L-Leu, and L-Ile, moderate affinity for L-Arg, L-Asp, and L-His, and very low affinity for L-Gln, L-Lys, and L-Ala. Also shows high activity on L-norleucine (L-2-aminohexanoate), and L-norvaline (L-2-aminopentanoate) and a weak activity on L-ornithine and L-aminobutyric acid. Also exhibits diverse biological activities, such as hemorrhage, hemolysis, edema, apoptosis of vascular endothelial cells or tumor cell lines, and antiparasitic activities, as well as regulation of platelet aggregation. Its effect on platelets is controversial, since it either induces aggregation or inhibits agonist-induced aggregation. These different effects are probably due to different experimental conditions. A possible explanation of high efficacy it that LAAO may bind to target cells through its sialylated glycan moiety that would bind to sialic acid-binding lectins (siglec) on target cells. This interaction may result in production of locally high concentrations of hydrogen peroxide in or near the binding interface, leading, in turn to oxidative damage of the siglec or another adjacent cell structural elements. This chain is L-amino-acid oxidase, found in Calloselasma rhodostoma (Malayan pit viper).